A 2332-amino-acid chain; its full sequence is Genome polyprotein (2332 aa).

Residues methionine 1–lysine 201 form the Peptidase C28 domain. Residues methionine 1 to leucine 1480 lie on the Cytoplasmic side of the membrane. Residues cysteine 51, histidine 148, and aspartate 163 each act as for leader protease activity in the active site. Disordered stretches follow at residues glutamine 197 to asparagine 218 and glutamine 238 to asparagine 265. The N-myristoyl glycine; by host moiety is linked to residue glycine 202. Composition is skewed to polar residues over residues glycine 204–asparagine 218 and glutamine 238–glycine 251. A compositionally biased stretch (low complexity) spans serine 252–asparagine 265. Cysteines 406 and 858 form a disulfide. The segment at alanine 788–tyrosine 796 is antigenic epitope. The Cell attachment site motif lies at arginine 869–aspartate 871. One can recognise an SF3 helicase domain in the interval asparagine 1189–aspartate 1353. Position 1217–1224 (glycine 1217–serine 1224) interacts with ATP. The stretch at lysine 1481–isoleucine 1501 is an intramembrane region. At arginine 1502 to alanine 2332 the chain is on the cytoplasmic side. Residues lysine 1529 to proline 1538 are compositionally biased toward basic and acidic residues. Residues lysine 1529–proline 1584 are disordered. Tyrosine 1581, tyrosine 1604, and tyrosine 1628 each carry O-(5'-phospho-RNA)-tyrosine. Residues alanine 1652–leucine 1848 form the Peptidase C3 domain. Histidine 1695 functions as the For protease 3C activity; Proton donor/acceptor in the catalytic mechanism. Residues aspartate 1733 and cysteine 1812 each act as for protease 3C activity in the active site. Short sequence motifs (nuclear localization signal) lie at residues methionine 1878 to threonine 1886 and arginine 1879 to threonine 1886. A RdRp catalytic domain is found at arginine 2096–alanine 2214. The active-site For RdRp activity is the aspartate 2200.

This sequence belongs to the picornaviruses polyprotein family. In terms of assembly, interacts with host ISG15. Interacts (via R-G-D motif) with host ITGAV/ITGB6. Interacts with host MAVS; this interaction inhibits binding of host TRAF3 to MAVS, thereby suppressing interferon-mediated responses. As to quaternary structure, forms homooligomers. In terms of assembly, homohexamer. Interacts with host VIM. Interacts with host BECN1. Interacts with host DCTN3. As to quaternary structure, interacts with RNA-dependent RNA polymerase; this interaction allows 3B-1 to binds 2 polymerases and act as a primer. It also allows the recruitment of the RNA-dependent RNA polymerase to host membranes. In terms of assembly, interacts with RNA-dependent RNA polymerase; this interaction allows 3B-2 to act as a primer. Interacts with RNA-dependent RNA polymerase; this interaction allows 3B-3 to act as a primer. As to quaternary structure, interacts with 3B-1; this interaction allows 3B-1 to binds 2 polymerases and act as a primer. It also allows the recruitment of the RNA-dependent RNA polymerase to host membranes. Interacts with 3B-2; this interaction allows 3B-2 to act as a primer. Interacts with 3B-3; this interaction allows 3B-3 to act as a primer. In terms of processing, removes six residues from its own C-terminus, generating sLb(pro). Post-translationally, specific enzymatic cleavages in vivo by the viral proteases yield a variety of precursors and mature proteins. The polyprotein seems to be cotranslationally cleaved at the 2A/2B junction by a ribosomal skip from one codon to the next without formation of a peptide bond. This process would release the L-P1-2A peptide from the translational complex. During virion maturation, immature virions are rendered infectious following cleavage of VP0 into VP4 and VP2. This maturation seems to be an autocatalytic event triggered by the presence of RNA in the capsid and is followed by a conformational change of the particle. In terms of processing, myristoylation is required during RNA encapsidation and formation of the mature virus particle. Post-translationally, uridylylated by the polymerase and covalently linked to the 5'-end of genomic RNA. These uridylylated forms act as a nucleotide-peptide primer for the polymerase. The disulfide bond between VP1 and VP2 occurs after release of virus from the host cell.

The protein localises to the host nucleus. It is found in the host cytoplasm. Its subcellular location is the virion. It localises to the host endoplasmic reticulum membrane. The protein resides in the host cytoplasmic vesicle membrane. The catalysed reaction is Autocatalytically cleaves itself from the polyprotein of the foot-and-mouth disease virus by hydrolysis of a Lys-|-Gly bond, but then cleaves host cell initiation factor eIF-4G at bonds -Gly-|-Arg- and -Lys-|-Arg-.. The enzyme catalyses a ribonucleoside 5'-triphosphate + H2O = a ribonucleoside 5'-diphosphate + phosphate + H(+). It catalyses the reaction RNA(n) + a ribonucleoside 5'-triphosphate = RNA(n+1) + diphosphate. It carries out the reaction Selective cleavage of Gln-|-Gly bond in the poliovirus polyprotein. In other picornavirus reactions Glu may be substituted for Gln, and Ser or Thr for Gly.. Its function is as follows. Autocatalytically cleaves itself from the polyprotein at the L/VP0 junction. Also cleaves the host translation initiation factors EIF4G1 and EIF4G3, in order to shut off the capped cellular mRNA transcription. Plays a role in counteracting host innate antiviral response using diverse mechanisms. Possesses a deubiquitinase activity acting on both 'Lys-48' and 'Lys-63'-linked polyubiquitin chains. In turn, inhibits the ubiquitination and subsequent activation of key signaling molecules of type I IFN response such as host RIGI, TBK1, TRAF3 and TRAF6. Inhibits host NF-kappa-B activity by inducing a decrease in RELA mRNA levels. Cleaves a peptide bond in the C-terminus of host ISG15, resulting in the damaging of this modifier that can no longer be attached to target proteins. Also cleaves host G3BP1 and G3BP2 in order to inhibit cytoplasmic stress granules assembly. In terms of biological role, lies on the inner surface of the capsid shell. After binding to the host receptor, the capsid undergoes conformational changes. Capsid protein VP4 is released, capsid protein VP1 N-terminus is externalized, and together, they shape a pore in the host membrane through which the viral genome is translocated into the host cell cytoplasm. After genome has been released, the channel shrinks. Functionally, forms an icosahedral capsid of pseudo T=3 symmetry with capsid proteins VP1 and VP3. The capsid is composed of 60 copies of each capsid protein organized in the form of twelve pentamers and encloses the viral positive strand RNA genome. Upon acidifcation in the endosome, dissociates into pentamers. Forms an icosahedral capsid of pseudo T=3 symmetry with capsid proteins VP2 and VP3. The capsid is composed of 60 copies of each capsid protein organized in the form of twelve pentamers and encloses the viral positive strand RNA genome. Mediates cell entry by attachment to an integrin receptor, usually host ITGAV/ITGB6, via a conserved arginine-glycine-aspartic acid (R-G-D) motif. In addition, targets host MAVS to suppress type I IFN pathway. Upon acidifcation in the endosome, dissociates into pentamers. Its function is as follows. Forms an icosahedral capsid of pseudo T=3 symmetry with capsid proteins VP0 and VP3. The capsid is composed of 60 copies of each capsid protein organized in the form of twelve pentamers and encloses the viral positive strand RNA genome. Upon acidifcation in the endosome, dissociates into pentamers. In terms of biological role, mediates self-processing of the polyprotein by a translational effect termed 'ribosome skipping'. Mechanistically, 2A-mediated cleavage occurs between the C-terminal glycine and the proline of the downstream protein 2B. In the case of foot-and-mouth disease virus, the 2A oligopeptide is post-translationally 'trimmed' from the C-terminus of the upstream protein 1D by 3C proteinase. Functionally, plays an essential role in the virus replication cycle by acting as a viroporin. Creates a pore in the host endoplasmic reticulum and as a consequence releases Ca2+ in the cytoplasm of infected cell. In turn, high levels of cytoplasmic calcium may trigger membrane trafficking and transport of viral ER-associated proteins to viroplasms, sites of viral genome replication. Associates with and induces structural rearrangements of intracellular membranes. Triggers host autophagy by interacting with host BECN1 and thereby promotes viral replication. Participates in viral replication and interacts with host DHX9. Displays RNA-binding, nucleotide binding and NTPase activities. May play a role in virion morphogenesis and viral RNA encapsidation by interacting with the capsid protein VP3. Its function is as follows. Plays important roles in virus replication, virulence and host range. Cooperates with host DDX56 to inhibit IRF3 nuclear translocation and subsequent type I interferon production. In terms of biological role, covalently linked to the 5'-end of both the positive-strand and negative-strand genomic RNAs. Acts as a genome-linked replication primer. Functionally, cysteine protease that generates mature viral proteins from the precursor polyprotein. In addition to its proteolytic activity, binds to viral RNA and thus influences viral genome replication. RNA and substrate bind cooperatively to the protease. RNA-directed RNA polymerase 3D-POL replicates genomic and antigenomic RNA by recognizing replications specific signals. Covalently attaches UMP to a tyrosine of VPg, which is used to prime RNA synthesis. The positive stranded RNA genome is first replicated at virus induced membranous vesicles, creating a dsRNA genomic replication form. This dsRNA is then used as template to synthesize positive stranded RNA genomes. ss(+)RNA genomes are either translated, replicated or encapsidated. This chain is Genome polyprotein, found in Bos taurus (Bovine).